We begin with the raw amino-acid sequence, 291 residues long: Gamma-sarcoglycan (291 aa).

The Cytoplasmic portion of the chain corresponds to Met1–Tyr37. The helical; Signal-anchor for type II membrane protein transmembrane segment at Leu38 to Leu58 threads the bilayer. Residues Lys59 to Leu291 are Extracellular-facing. Residue Asn110 is glycosylated (N-linked (GlcNAc...) asparagine). Cystine bridges form between Cys265–Cys290 and Cys267–Cys283.

The protein belongs to the sarcoglycan beta/delta/gamma/zeta family. As to quaternary structure, interacts with the syntrophin SNTA1 and FLNC. Cross-link to form 2 major subcomplexes: one consisting of SGCB, SGCD and SGCG and the other consisting of SGCB and SGCD. The association between SGCB and SGCG is particularly strong while SGCA is loosely associated with the other sarcoglycans. As to expression, most strongly expressed in skeletal and heart muscle. Also detected in proliferating myoblasts.

It is found in the cell membrane. The protein localises to the sarcolemma. Its subcellular location is the cytoplasm. It localises to the cytoskeleton. Component of the sarcoglycan complex, a subcomplex of the dystrophin-glycoprotein complex which forms a link between the F-actin cytoskeleton and the extracellular matrix. The chain is Gamma-sarcoglycan (Sgcg) from Mus musculus (Mouse).